The following is a 143-amino-acid chain: Acyl carrier protein 3, chloroplastic (143 aa).

The transit peptide at 1-60 directs the protein to the chloroplast; it reads MATAAAGSSLICIKSASCSLNRAQVPSGLSSLRSVSLPISGKIFPSLRSSRGPLSFRVCC. Residues 64 to 139 form the Carrier domain; that stretch reads QETVTRVCEI…DAADLIEKLV (76 aa). Ser-99 bears the O-(pantetheine 4'-phosphoryl)serine mark.

Belongs to the acyl carrier protein (ACP) family. 4'-phosphopantetheine is transferred from CoA to a specific serine of apo-ACP by acpS. This modification is essential for activity because fatty acids are bound in thioester linkage to the sulfhydryl of the prosthetic group.

The protein resides in the plastid. The protein localises to the chloroplast. It participates in lipid metabolism; fatty acid biosynthesis. Its function is as follows. Carrier of the growing fatty acid chain in fatty acid biosynthesis. The protein is Acyl carrier protein 3, chloroplastic (ACL1.3) of Cuphea lanceolata (Cigar flower).